We begin with the raw amino-acid sequence, 485 residues long: Ribosomal protein uS12 methylthiotransferase RimO (485 aa).

The 117-residue stretch at 19–135 (VKVGFISLGC…IGEVVAGILA (117 aa)) folds into the MTTase N-terminal domain. Cysteine 28, cysteine 64, cysteine 98, cysteine 172, cysteine 176, and cysteine 179 together coordinate [4Fe-4S] cluster. Residues 158-387 (ATPGYTAYLK…MEVQQEIARR (230 aa)) enclose the Radical SAM core domain. The TRAM domain occupies 390 to 461 (QLQVGRELEV…DYDLLGEATE (72 aa)).

Belongs to the methylthiotransferase family. RimO subfamily. [4Fe-4S] cluster is required as a cofactor.

Its subcellular location is the cytoplasm. It carries out the reaction L-aspartate(89)-[ribosomal protein uS12]-hydrogen + (sulfur carrier)-SH + AH2 + 2 S-adenosyl-L-methionine = 3-methylsulfanyl-L-aspartate(89)-[ribosomal protein uS12]-hydrogen + (sulfur carrier)-H + 5'-deoxyadenosine + L-methionine + A + S-adenosyl-L-homocysteine + 2 H(+). Functionally, catalyzes the methylthiolation of an aspartic acid residue of ribosomal protein uS12. This is Ribosomal protein uS12 methylthiotransferase RimO from Symbiobacterium thermophilum (strain DSM 24528 / JCM 14929 / IAM 14863 / T).